The sequence spans 201 residues: Prostamide/prostaglandin F synthase (201 aa).

Belongs to the peroxiredoxin-like PRXL2 family. Prostamide/prostaglandin F synthase subfamily.

Its subcellular location is the cytoplasm. It is found in the cytosol. It catalyses the reaction prostaglandin H2 + [thioredoxin]-dithiol = prostaglandin F2alpha + [thioredoxin]-disulfide. The catalysed reaction is prostamide F2alpha + [thioredoxin]-disulfide = prostamide H2 + [thioredoxin]-dithiol. In terms of biological role, catalyzes the reduction of prostaglandin-ethanolamide H(2) (prostamide H(2)) to prostamide F(2alpha) with NADPH as proton donor. Also able to reduce prostaglandin H(2) to prostaglandin F(2alpha). The chain is Prostamide/prostaglandin F synthase (prxl2b) from Aquarana catesbeiana (American bullfrog).